The chain runs to 230 residues: 6-carboxyhexanoate--CoA ligase (230 aa).

This sequence belongs to the BioW family. Homodimer. Requires Mg(2+) as cofactor.

The enzyme catalyses heptanedioate + ATP + CoA = 6-carboxyhexanoyl-CoA + AMP + diphosphate. Its pathway is metabolic intermediate metabolism; pimeloyl-CoA biosynthesis; pimeloyl-CoA from pimelate: step 1/1. In terms of biological role, catalyzes the transformation of pimelate into pimeloyl-CoA with concomitant hydrolysis of ATP to AMP. This chain is 6-carboxyhexanoate--CoA ligase, found in Staphylococcus aureus (strain Mu3 / ATCC 700698).